The sequence spans 110 residues: Small nuclear ribonucleoprotein Sm D2 (110 aa).

Residues 31–110 (MSLINDAMVT…VIVVLKTPVE (80 aa)) form the Sm domain.

Belongs to the snRNP core protein family. Component of the Sm core complex, present in spliceosomal snRNP U1, U2, U4/U6 and U5. The core complex contains SMB1, SMD1, SMD2, SMD3, SME1, SMX3 and SMX2 (Sm proteins B, D1, D2, D3, E, F and G, respectively), and is probably a heptameric ring structure. Belongs to the CWC complex (or CEF1-associated complex), a spliceosome sub-complex reminiscent of a late-stage spliceosome composed of the U2, U5 and U6 snRNAs and at least BUD13, BUD31, BRR2, CDC40, CEF1, CLF1, CUS1, CWC2, CWC15, CWC21, CWC22, CWC23, CWC24, CWC25, CWC27, ECM2, HSH155, IST3, ISY1, LEA1, MSL1, NTC20, PRP8, PRP9, PRP11, PRP19, PRP21, PRP22, PRP45, PRP46, SLU7, SMB1, SMD1, SMD2, SMD3, SMX2, SMX3, SNT309, SNU114, SPP2, SYF1, SYF2, RSE1 and YJU2. Component of the U4/U6-U5 tri-snRNP complex composed of the U4, U6 and U5 snRNAs and at least PRP3, PRP4, PRP6, PRP8, PRP18, PRP31, PRP38, SNU13, SNU23, SNU66, SNU114, SPP381, SMB1, SMD1, SMD2, SMD3, SMX2, SMX3, LSM2, LSM3, LSM4, LSM5, LSM6, LSM7, LSM8, BRR2 and DIB1.

Its subcellular location is the nucleus. It localises to the cytoplasm. The protein localises to the cytosol. Functionally, plays a role in pre-mRNA splicing as a core component of the spliceosomal U1, U2, U4 and U5 small nuclear ribonucleoproteins (snRNPs), the building blocks of the spliceosome. The polypeptide is Small nuclear ribonucleoprotein Sm D2 (SMD2) (Saccharomyces cerevisiae (strain ATCC 204508 / S288c) (Baker's yeast)).